We begin with the raw amino-acid sequence, 256 residues long: Cytoplasmic envelopment protein 1 (256 aa).

It belongs to the herpesviridae cytoplasmic envelopment protein 1 family.

Its subcellular location is the virion. It localises to the virion tegument. The protein resides in the host cytoplasm. It is found in the host Golgi apparatus. Functionally, plays a critical role in cytoplasmic virus egress. Participates in the final step of tegumentation and envelope acquisition within the host cytoplasm. This Homo sapiens (Human) protein is Cytoplasmic envelopment protein 1 (U75).